Reading from the N-terminus, the 154-residue chain is 3-hydroxyacyl-[acyl-carrier-protein] dehydratase FabZ (154 aa).

H60 is a catalytic residue.

The protein belongs to the thioester dehydratase family. FabZ subfamily.

It is found in the cytoplasm. The enzyme catalyses a (3R)-hydroxyacyl-[ACP] = a (2E)-enoyl-[ACP] + H2O. Its function is as follows. Involved in unsaturated fatty acids biosynthesis. Catalyzes the dehydration of short chain beta-hydroxyacyl-ACPs and long chain saturated and unsaturated beta-hydroxyacyl-ACPs. This chain is 3-hydroxyacyl-[acyl-carrier-protein] dehydratase FabZ, found in Synechococcus sp. (strain CC9311).